Reading from the N-terminus, the 648-residue chain is Phosphomethylpyrimidine synthase (648 aa).

Residues Asn-236, Met-265, Tyr-294, His-330, 350-352 (SRG), 391-394 (DGLR), and Glu-430 contribute to the substrate site. Residue His-434 participates in Zn(2+) binding. Tyr-457 lines the substrate pocket. His-498 serves as a coordination point for Zn(2+). Residues Cys-578, Cys-581, and Cys-586 each coordinate [4Fe-4S] cluster.

Belongs to the ThiC family. As to quaternary structure, homodimer. It depends on [4Fe-4S] cluster as a cofactor.

The enzyme catalyses 5-amino-1-(5-phospho-beta-D-ribosyl)imidazole + S-adenosyl-L-methionine = 4-amino-2-methyl-5-(phosphooxymethyl)pyrimidine + CO + 5'-deoxyadenosine + formate + L-methionine + 3 H(+). It participates in cofactor biosynthesis; thiamine diphosphate biosynthesis. Catalyzes the synthesis of the hydroxymethylpyrimidine phosphate (HMP-P) moiety of thiamine from aminoimidazole ribotide (AIR) in a radical S-adenosyl-L-methionine (SAM)-dependent reaction. The protein is Phosphomethylpyrimidine synthase of Aliivibrio salmonicida (strain LFI1238) (Vibrio salmonicida (strain LFI1238)).